The primary structure comprises 99 residues: Large ribosomal subunit protein eL21 (99 aa).

The protein belongs to the eukaryotic ribosomal protein eL21 family.

In Pyrobaculum calidifontis (strain DSM 21063 / JCM 11548 / VA1), this protein is Large ribosomal subunit protein eL21.